An 89-amino-acid chain; its full sequence is Snake venom serine protease rhinocerase (89 aa).

The 89-residue stretch at 1–89 (VIGGAECDIN…KVFDYIPWIK (89 aa)) folds into the Peptidase S1 domain. Catalysis depends on Asp45, which acts as the Charge relay system. A disulfide bridge connects residues Cys64 and Cys69.

This sequence belongs to the peptidase S1 family. Snake venom subfamily. Post-translationally, glycosylated. As to expression, expressed by the venom gland.

The protein resides in the secreted. Inhibited by PMSF. Not inhibited by benzamidine. Functionally, snake venom serine protease that cleaves fibrinogen alpha and beta chains (FGA and FGB), but not gamma chains. Exhibits fibrinolytic and kininogenolytic. Preferentially cleaves after Arg and Lys residues. This chain is Snake venom serine protease rhinocerase, found in Bitis rhinoceros (West African gaboon viper).